We begin with the raw amino-acid sequence, 308 residues long: tRNA dimethylallyltransferase (308 aa).

9-16 (GPTAVGKT) lines the ATP pocket. Substrate is bound at residue 11–16 (TAVGKT). An interaction with substrate tRNA region spans residues 34–37 (DSMQ).

The protein belongs to the IPP transferase family. Monomer. The cofactor is Mg(2+).

The catalysed reaction is adenosine(37) in tRNA + dimethylallyl diphosphate = N(6)-dimethylallyladenosine(37) in tRNA + diphosphate. In terms of biological role, catalyzes the transfer of a dimethylallyl group onto the adenine at position 37 in tRNAs that read codons beginning with uridine, leading to the formation of N6-(dimethylallyl)adenosine (i(6)A). This Lactobacillus delbrueckii subsp. bulgaricus (strain ATCC 11842 / DSM 20081 / BCRC 10696 / JCM 1002 / NBRC 13953 / NCIMB 11778 / NCTC 12712 / WDCM 00102 / Lb 14) protein is tRNA dimethylallyltransferase.